The primary structure comprises 499 residues: Guanosine-5'-triphosphate,3'-diphosphate pyrophosphatase (499 aa).

It belongs to the GppA/Ppx family. GppA subfamily.

The catalysed reaction is guanosine 3'-diphosphate 5'-triphosphate + H2O = guanosine 3',5'-bis(diphosphate) + phosphate + H(+). The protein operates within purine metabolism; ppGpp biosynthesis; ppGpp from GTP: step 2/2. Its function is as follows. Catalyzes the conversion of pppGpp to ppGpp. Guanosine pentaphosphate (pppGpp) is a cytoplasmic signaling molecule which together with ppGpp controls the 'stringent response', an adaptive process that allows bacteria to respond to amino acid starvation, resulting in the coordinated regulation of numerous cellular activities. This Klebsiella pneumoniae subsp. pneumoniae (strain ATCC 700721 / MGH 78578) protein is Guanosine-5'-triphosphate,3'-diphosphate pyrophosphatase.